A 190-amino-acid polypeptide reads, in one-letter code: MAFIAKSFYDLSAISLDGEKVDFNTFRGRAVLIENVASLUGTTTRDFTQLNELQCRFPRRLVVLGFPCNQFGHQENCQNEEILNSLKYVRPGSGYQPTFTLVQKCEVNGQNEHPVFAYLKDKLPYPYDDPFSLMTDPKLIIWSPVRRSDVAWNFEKFLIGPEGEPFRRYSRTFPTINIEPDIKRLLKVAI.

Sec-40 is a catalytic residue. A non-standard amino acid (selenocysteine) is located at residue Sec-40.

The protein belongs to the glutathione peroxidase family. As to quaternary structure, homotetramer.

It is found in the cytoplasm. It localises to the cytosol. The enzyme catalyses 2 glutathione + H2O2 = glutathione disulfide + 2 H2O. It catalyses the reaction a hydroperoxy polyunsaturated fatty acid + 2 glutathione = a hydroxy polyunsaturated fatty acid + glutathione disulfide + H2O. It carries out the reaction tert-butyl hydroperoxide + 2 glutathione = tert-butanol + glutathione disulfide + H2O. The catalysed reaction is cumene hydroperoxide + 2 glutathione = 2-phenylpropan-2-ol + glutathione disulfide + H2O. The enzyme catalyses (13S)-hydroperoxy-(9Z,11E)-octadecadienoate + 2 glutathione = (13S)-hydroxy-(9Z,11E)-octadecadienoate + glutathione disulfide + H2O. It catalyses the reaction (5S)-hydroperoxy-(6E,8Z,11Z,14Z)-eicosatetraenoate + 2 glutathione = (5S)-hydroxy-(6E,8Z,11Z,14Z)-eicosatetraenoate + glutathione disulfide + H2O. It carries out the reaction (12R)-hydroperoxy-(5Z,8Z,10E,14Z)-eicosatetraenoate + 2 glutathione = (12R)-hydroxy-(5Z,8Z,10E,14Z)-eicosatetraenoate + glutathione disulfide + H2O. The catalysed reaction is (15S)-hydroperoxy-(5Z,8Z,11Z,13E)-eicosatetraenoate + 2 glutathione = (15S)-hydroxy-(5Z,8Z,11Z,13E)-eicosatetraenoate + glutathione disulfide + H2O. Its function is as follows. Catalyzes the reduction of hydroperoxides in a glutathione-dependent manner thus regulating cellular redox homeostasis. Can reduce small soluble hydroperoxides such as H2O2, cumene hydroperoxide and tert-butyl hydroperoxide, as well as several fatty acid-derived hydroperoxides. Cannot reduce phosphatidycholine hydroperoxide. The protein is Glutathione peroxidase 2 (GPX2) of Pongo pygmaeus (Bornean orangutan).